The sequence spans 90 residues: Small ribosomal subunit protein bS16 (90 aa).

This sequence belongs to the bacterial ribosomal protein bS16 family.

The protein is Small ribosomal subunit protein bS16 of Streptococcus gordonii (strain Challis / ATCC 35105 / BCRC 15272 / CH1 / DL1 / V288).